The chain runs to 275 residues: Large ribosomal subunit protein uL2 (275 aa).

The disordered stretch occupies residues 224–275 (AMNPVDHPHGGGEGKAPIGHPGPLTPWGKPALGYKTRKKGKASDKFIIRRRK). A compositionally biased stretch (basic and acidic residues) spans 264 to 275 (KASDKFIIRRRK).

The protein belongs to the universal ribosomal protein uL2 family. As to quaternary structure, part of the 50S ribosomal subunit. Forms a bridge to the 30S subunit in the 70S ribosome.

One of the primary rRNA binding proteins. Required for association of the 30S and 50S subunits to form the 70S ribosome, for tRNA binding and peptide bond formation. It has been suggested to have peptidyltransferase activity; this is somewhat controversial. Makes several contacts with the 16S rRNA in the 70S ribosome. This is Large ribosomal subunit protein uL2 from Thermoanaerobacter pseudethanolicus (strain ATCC 33223 / 39E) (Clostridium thermohydrosulfuricum).